Consider the following 134-residue polypeptide: MANVYSRKKRIAHEIQKKINISLQHNIRDPRLRKTTISWVSVSHDLGSATVFVIFNGIQNDNQTSEEIKKRIKTLQAASGFIRYLLGKTMHLRIVPKLTFVYDQSLSHGIYIHELVNKIIREDHKSLIKNGIVN.

Belongs to the RbfA family. In terms of assembly, monomer. Binds 30S ribosomal subunits, but not 50S ribosomal subunits or 70S ribosomes.

It localises to the cytoplasm. Its function is as follows. One of several proteins that assist in the late maturation steps of the functional core of the 30S ribosomal subunit. Associates with free 30S ribosomal subunits (but not with 30S subunits that are part of 70S ribosomes or polysomes). Required for efficient processing of 16S rRNA. May interact with the 5'-terminal helix region of 16S rRNA. In Baumannia cicadellinicola subsp. Homalodisca coagulata, this protein is Ribosome-binding factor A.